We begin with the raw amino-acid sequence, 64 residues long: Large ribosomal subunit protein bL35 (64 aa).

The span at Met1–Arg15 shows a compositional bias: basic residues. The disordered stretch occupies residues Met1 to Val22.

The protein belongs to the bacterial ribosomal protein bL35 family.

In Frankia casuarinae (strain DSM 45818 / CECT 9043 / HFP020203 / CcI3), this protein is Large ribosomal subunit protein bL35.